Reading from the N-terminus, the 709-residue chain is MATCAEILRSEFPEIDGQVFDYVTGVLHSGSADFESVDDLVEAVGELLQEVSGDSKDDAGIRAVCQRMYNTLRLAEPQSQGNSQVLLDAPIQLSKITENYDCGTKLPGLLKREQSSTVNAKKLEKAEARLKAKQEKRSEKDTLKTSNPLVLEEASASQAGSRKESRLESSGKNKSYDVRIENFDVSFGDRVLLAGADVNLAWGRRYGLVGRNGLGKTTLLKMLATRSLRVPAHISLLHVEQEVAGDDTPALQSVLESDSVREDLLRRERELTAQIAAGRAEGSEAAELAEIYAKLEEIEADKAPARASVILAGLGFTPKMQQQPTREFSGGWRMRLALARALFARPDLLLLDEPTNMLDVRAILWLENYLQTWPSTILVVSHDRNFLNAIATDIIHLHSQRLDGYRGDFETFIKSKQERLLNQQREYEAQQQYRQHIQVFIDRFRYNANRASQVQSKLKMLEKLPELKPVDKESEVVMKFPDGFEKFSPPILQLDEVDFYYDPKHVIFSRLSVSADLESRICVVGENGAGKSTMLKLLLGDLAPVRGIRHAHRNLKIGYFSQHHVEQLDLNVSAVELLARKFPGRPEEEYRHQLGRYGISGELAMRPLASLSGGQKSRVAFAQMTMPCPNFYILDEPTNHLDMETIEALGRALNNFRGGVILVSHDERFIRLVCRELWVCEGGGVTRVEGGFDQYRALLQEQFRREGFL.

At A2 the chain carries N-acetylalanine. S83 bears the Phosphoserine mark. Over residues R129–L143 the composition is skewed to basic and acidic residues. The segment at R129–G171 is disordered. S155, S157, and S161 each carry phosphoserine. A compositionally biased stretch (basic and acidic residues) spans S161 to G171. ABC transporter domains are found at residues V178–Q424 and L492–G707. G210–T217 is a binding site for ATP. Phosphoserine is present on S283. Position 525 to 532 (G525 to S532) interacts with ATP.

This sequence belongs to the ABC transporter superfamily. ABCF family. EF3 subfamily.

In terms of biological role, displays an antiviral effect against flaviviruses such as west Nile virus (WNV) in the presence of OAS1B. This Homo sapiens (Human) protein is ATP-binding cassette sub-family F member 3 (ABCF3).